We begin with the raw amino-acid sequence, 107 residues long: MKQFRIHKDDKVMVIAGKDKGKIGKVLKILRNKDRILVEKVNVAKRHVRPNPYRQQPGGIIEKEMPLHVSNVMVVCDACAKPTKVGYRYTEDGKKVRFCKKCNEIID.

The protein belongs to the universal ribosomal protein uL24 family. In terms of assembly, part of the 50S ribosomal subunit.

Its function is as follows. One of two assembly initiator proteins, it binds directly to the 5'-end of the 23S rRNA, where it nucleates assembly of the 50S subunit. In terms of biological role, one of the proteins that surrounds the polypeptide exit tunnel on the outside of the subunit. The chain is Large ribosomal subunit protein uL24 from Nitratidesulfovibrio vulgaris (strain ATCC 29579 / DSM 644 / CCUG 34227 / NCIMB 8303 / VKM B-1760 / Hildenborough) (Desulfovibrio vulgaris).